Consider the following 138-residue polypeptide: Host cell factor C1 regulator 1 (138 aa).

An interaction with HCFC1 region spans residues 76–79; it reads DHPY. The Nuclear export signal motif lies at 110–119; sequence IPEALRLLRL.

Interacts with HCFC1. Widely expressed.

The protein resides in the cytoplasm. It is found in the nucleus. Regulates HCFC1 activity by modulating its subcellular localization. Overexpression of HCFC1R1 leads to accumulation of HCFC1 in the cytoplasm. HCFC1R1-mediated export may provide the pool of cytoplasmic HCFC1 required for import of virion-derived VP16 into the nucleus. This chain is Host cell factor C1 regulator 1 (HCFC1R1), found in Homo sapiens (Human).